The following is an 842-amino-acid chain: Microcephalin (842 aa).

The BRCT 1 domain occupies 1 to 93 (MAAPILKDVV…AHIDESLFPA (93 aa)). Residues Ser-279, Ser-287, Ser-296, and Ser-333 each carry the phosphoserine modification. Phosphothreonine is present on Thr-335. Residues 346 to 359 (HSRPRSSSVKRKRV) show a composition bias toward basic residues. Disordered regions lie at residues 346–375 (HSRP…KRKR), 418–443 (PDNL…AQFS), and 563–624 (VGLK…PTRR). Polar residues-rich tracts occupy residues 434-443 (QLPSNPAQFS) and 566-582 (KSTQ…NSSE). Over residues 586-608 (PSEHEPRSVVDCNVERSAEEKEN) the composition is skewed to basic and acidic residues. BRCT domains lie at 647–737 (SGKG…PFEL) and 758–840 (YRGT…NYLL).

As to quaternary structure, interacts with CDC27 and maybe other components of the APC/C complex. Interacts with histone variant H2AX under DNA damage conditions.

It is found in the cytoplasm. It localises to the cytoskeleton. Its subcellular location is the microtubule organizing center. The protein localises to the centrosome. Functionally, implicated in chromosome condensation and DNA damage induced cellular responses. May play a role in neurogenesis and regulation of the size of the cerebral cortex. In Macaca fascicularis (Crab-eating macaque), this protein is Microcephalin.